The following is a 290-amino-acid chain: Homeobox protein HMX3-B (290 aa).

2 disordered regions span residues 1–41 (MADS…GSSK) and 96–169 (EKVN…KKKT). The span at 107–124 (LDRHTPDPPKSDQESKEE) shows a compositional bias: basic and acidic residues. The span at 125–137 (SADDEIALEESDA) shows a compositional bias: acidic residues. The span at 138–162 (EEPKKETDQEDDWMRKGEDLESDKK) shows a compositional bias: basic and acidic residues. Residues 166–225 (KKKTRTVFSRSQVFQLESTFDIKRYLSSSERAGLAASLHLTETQVKIWFQNRRNKWKRQL) constitute a DNA-binding region (homeobox).

The protein belongs to the HMX homeobox family. Expressed in the ear placode and vesicle and in cells forming the vestibulo-acoustic ganglion.

The protein localises to the nucleus. Functionally, transcription factor involved in specification of neuronal cell types and which is required for inner ear and hypothalamus development. Binds to the 5'-CAAGTG-3' core sequence. This is Homeobox protein HMX3-B (hmx3b) from Oryzias latipes (Japanese rice fish).